A 390-amino-acid polypeptide reads, in one-letter code: Nuclear receptor subfamily 2 group F member 6 (390 aa).

The span at 1–15 shows a compositional bias: gly residues; the sequence is MAMVTGGWGGPGGDT. Positions 1–50 are disordered; it reads MAMVTGGWGGPGGDTNGVDKAGGSYPRATEDDSASPPGATSDAEPGDEER. S35 and S41 each carry phosphoserine. A DNA-binding region (nuclear receptor) is located at residues 54 to 129; it reads QVDCVVCGDK…VGMRKEAVQP (76 aa). 2 NR C4-type zinc fingers span residues 57–77 and 93–117; these read CVVCGDKSSGKHYGVFTCEGC and CRSNRDCQIDQHHRNQCQYCRLKKC. The region spanning 157–380 is the NR LBD domain; that stretch reads PVSELIAQLL…TLIRDMLLSG (224 aa). Residues 314–390 form an important for dimerization region; the sequence is LQEKAQVALT…STFNWPYGSG (77 aa).

It belongs to the nuclear hormone receptor family. NR2 subfamily. As to quaternary structure, binds DNA as dimer; homodimer and heterodimer with NR2F2 and probably NR2F1. Interacts with THRB.

Its subcellular location is the nucleus. Functionally, transcription factor predominantly involved in transcriptional repression. Binds to promoter/enhancer response elements that contain the imperfect 5'-AGGTCA-3' direct or inverted repeats with various spacings which are also recognized by other nuclear hormone receptors. Involved in modulation of hormonal responses. Represses transcriptional activity of the lutropin-choriogonadotropic hormone receptor/LHCGR gene, the renin/REN gene and the oxytocin-neurophysin/OXT gene. Represses the triiodothyronine-dependent and -independent transcriptional activity of the thyroid hormone receptor gene in a cell type-specific manner. The corepressing function towards thyroid hormone receptor beta/THRB involves at least in part the inhibition of THRB binding to triiodothyronine response elements (TREs) by NR2F6. Inhibits NFATC transcription factor DNA binding and subsequently its transcriptional activity. Acts as transcriptional repressor of IL-17 expression in Th-17 differentiated CD4(+) T cells and may be involved in induction and/or maintenance of peripheral immunological tolerance and autoimmunity. Involved in development of forebrain circadian clock; is required early in the development of the locus coeruleus (LC). This is Nuclear receptor subfamily 2 group F member 6 (Nr2f6) from Rattus norvegicus (Rat).